The primary structure comprises 329 residues: Phenylalanine--tRNA ligase alpha subunit (329 aa).

Residue E254 coordinates Mg(2+).

Belongs to the class-II aminoacyl-tRNA synthetase family. Phe-tRNA synthetase alpha subunit type 1 subfamily. In terms of assembly, tetramer of two alpha and two beta subunits. Mg(2+) serves as cofactor.

It localises to the cytoplasm. It catalyses the reaction tRNA(Phe) + L-phenylalanine + ATP = L-phenylalanyl-tRNA(Phe) + AMP + diphosphate + H(+). This chain is Phenylalanine--tRNA ligase alpha subunit, found in Histophilus somni (strain 2336) (Haemophilus somnus).